Here is a 611-residue protein sequence, read N- to C-terminus: Chaperone protein HtpG (611 aa).

The a; substrate-binding stretch occupies residues 1–326 (MSETLERHAF…TEDLPLNVSR (326 aa)). The interval 327–536 (EMLQATPVLA…SGGPDLQMQR (210 aa)) is b. The segment at 537–611 (LLRRAGRGFG…RVAAALAAQA (75 aa)) is c.

The protein belongs to the heat shock protein 90 family. In terms of assembly, homodimer.

It localises to the cytoplasm. Functionally, molecular chaperone. Has ATPase activity. The protein is Chaperone protein HtpG of Methylobacterium sp. (strain 4-46).